Reading from the N-terminus, the 327-residue chain is Glycerol-3-phosphate dehydrogenase [NAD(P)+] (327 aa).

W11, H30, and K103 together coordinate NADPH. Residues K103, G131, and S133 each coordinate sn-glycerol 3-phosphate. NADPH is bound at residue A135. K186, D243, S253, R254, and N255 together coordinate sn-glycerol 3-phosphate. The Proton acceptor role is filled by K186. Position 254 (R254) interacts with NADPH. Residues V281 and E283 each contribute to the NADPH site.

This sequence belongs to the NAD-dependent glycerol-3-phosphate dehydrogenase family.

It localises to the cytoplasm. The catalysed reaction is sn-glycerol 3-phosphate + NAD(+) = dihydroxyacetone phosphate + NADH + H(+). It carries out the reaction sn-glycerol 3-phosphate + NADP(+) = dihydroxyacetone phosphate + NADPH + H(+). The protein operates within membrane lipid metabolism; glycerophospholipid metabolism. Functionally, catalyzes the reduction of the glycolytic intermediate dihydroxyacetone phosphate (DHAP) to sn-glycerol 3-phosphate (G3P), the key precursor for phospholipid synthesis. This chain is Glycerol-3-phosphate dehydrogenase [NAD(P)+], found in Wolbachia sp. subsp. Brugia malayi (strain TRS).